The sequence spans 325 residues: Tagatose 1,6-diphosphate aldolase 1 (325 aa).

Belongs to the aldolase LacD family.

It catalyses the reaction D-tagatofuranose 1,6-bisphosphate = D-glyceraldehyde 3-phosphate + dihydroxyacetone phosphate. It functions in the pathway carbohydrate metabolism; D-tagatose 6-phosphate degradation; D-glyceraldehyde 3-phosphate and glycerone phosphate from D-tagatose 6-phosphate: step 2/2. This Streptococcus pyogenes serotype M3 (strain ATCC BAA-595 / MGAS315) protein is Tagatose 1,6-diphosphate aldolase 1 (lacD1).